A 186-amino-acid chain; its full sequence is C-type lectin 37Da (186 aa).

A signal peptide spans 1 to 20 (MLKTLVQLFLVVAGFAPGFG). N-linked (GlcNAc...) asparagine glycans are attached at residues N35 and N47. The C-type lectin domain maps to 46-169 (INESYYVFGQ…CHNHASSLFK (124 aa)). An intrachain disulfide couples C140 to C160.

Its subcellular location is the secreted. Its function is as follows. Galactose-specific lectin that displays calcium-dependent activity. Binds to the surface of hemocytes and enhances hemocyte encapsulation and melanization. This is likely by interacting with carbohydrates on the surface of the hemocytes. Also displays agglutination activity against the Gram-negative bacterium E.coli. The protein is C-type lectin 37Da of Drosophila melanogaster (Fruit fly).